A 731-amino-acid polypeptide reads, in one-letter code: 1,4-alpha-glucan branching enzyme GlgB (731 aa).

Aspartate 411 serves as the catalytic Nucleophile. Glutamate 464 serves as the catalytic Proton donor.

It belongs to the glycosyl hydrolase 13 family. GlgB subfamily. As to quaternary structure, monomer.

The enzyme catalyses Transfers a segment of a (1-&gt;4)-alpha-D-glucan chain to a primary hydroxy group in a similar glucan chain.. It functions in the pathway glycan biosynthesis; glycogen biosynthesis. Functionally, catalyzes the formation of the alpha-1,6-glucosidic linkages in glycogen by scission of a 1,4-alpha-linked oligosaccharide from growing alpha-1,4-glucan chains and the subsequent attachment of the oligosaccharide to the alpha-1,6 position. This chain is 1,4-alpha-glucan branching enzyme GlgB, found in Mycobacterium bovis (strain ATCC BAA-935 / AF2122/97).